Reading from the N-terminus, the 792-residue chain is Glucocorticoid receptor (792 aa).

Over residues 1–15 the composition is skewed to basic and acidic residues; it reads MDSKESLAPPGRDEV. The tract at residues 1 to 25 is disordered; sequence MDSKESLAPPGRDEVPSSLLGRGRG. A modulating region spans residues 1-436; it reads MDSKESLAPP…STATGPPPKL (436 aa). Arg24 is modified (omega-N-methylarginine). A Phosphoserine modification is found at Ser46. The interval 67–98 is disordered; it reads SKGSASNAQQQQQQQQQQQQQQQQQPQPDLSK. Low complexity predominate over residues 75–94; it reads QQQQQQQQQQQQQQQQQPQP. Ser131, Ser152, and Ser159 each carry phosphoserine. Over residues 148 to 162 the composition is skewed to polar residues; sequence NRSTSRPENPKSSTP. The interval 148 to 201 is disordered; it reads NRSTSRPENPKSSTPAAGCATPTEKEFPQTHSDPSSEQQNRKSQPGTNGGSVKL. Thr168 carries the post-translational modification Phosphothreonine. The segment covering 176–193 has biased composition (polar residues); sequence QTHSDPSSEQQNRKSQPG. Phosphoserine occurs at positions 221, 229, 243, and 284. Glycyl lysine isopeptide (Lys-Gly) (interchain with G-Cter in SUMO); alternate cross-links involve residues Lys294 and Lys310. Residues Lys294 and Lys310 each participate in a glycyl lysine isopeptide (Lys-Gly) (interchain with G-Cter in SUMO2); alternate cross-link. 2 positions are modified to phosphoserine: Ser324 and Ser421. The segment at residues 434–509 is a DNA-binding region (nuclear receptor); that stretch reads PKLCLVCSDE…AGMNLEARKT (76 aa). A Glycyl lysine isopeptide (Lys-Gly) (interchain with G-Cter in ubiquitin) cross-link involves residue Lys435. 2 consecutive NR C4-type zinc fingers follow at residues 437 to 457 and 473 to 497; these read CLVCSDEASGCHYGVLTCGSC and CAGRNDCIIDKIRRKNCPACRYRKC. N6-acetyllysine occurs at positions 496, 508, 510, and 511. The interval 501-792 is interaction with CLOCK; it reads GMNLEARKTK…NIKKLLFHQK (292 aa). Residues 503–538 form a hinge region; the sequence is NLEARKTKKKIKGIQQATAGVSQDTSENANKTIVPA. The NR LBD domain maps to 539–773; sequence ALPQLTPTLV…FPEMLAEIIT (235 aa). Residues 547–712 form an interaction with CRY1 region; that stretch reads LVSLLEVIEP…EIRMTYIKEL (166 aa). Residue Lys718 forms a Glycyl lysine isopeptide (Lys-Gly) (interchain with G-Cter in SUMO) linkage.

It belongs to the nuclear hormone receptor family. NR3 subfamily. In terms of assembly, heteromultimeric cytoplasmic complex with HSP90AA1, HSPA1A/HSPA1B, and FKBP5 or another immunophilin such as PPID, STIP1, or the immunophilin homolog PPP5C. Upon ligand binding FKBP5 dissociates from the complex and FKBP4 takes its place, thereby linking the complex to dynein and mediating transport to the nucleus, where the complex dissociates. Probably forms a complex composed of chaperones HSP90 and HSP70, co-chaperones CDC37, PPP5C, TSC1 and client protein TSC2, CDK4, AKT, RAF1 and NR3C1; this complex does not contain co-chaperones STIP1/HOP and PTGES3/p23. Directly interacts with UNC45A. Binds to DNA as a homodimer, and as heterodimer with NR3C2 or the retinoid X receptor. Binds STAT5A and STAT5B homodimers and heterodimers. Interacts with NRIP1, POU2F1, POU2F2 and TRIM28. Interacts with several coactivator complexes, including the SMARCA4 complex, CREBBP/EP300, TADA2L (Ada complex) and p160 coactivators such as NCOA2 and NCOA6. Interaction with BAG1 inhibits transactivation. Interacts with HEXIM1 and TGFB1I1. Interacts with NCOA1. Interacts with NCOA3, SMARCA4, SMARCC1, SMARCD1, and SMARCE1. Interacts with CLOCK, CRY1 and CRY2 in a ligand-dependent fashion. Interacts with CIART. Interacts with RWDD3. Interacts with UBE2I/UBC9 and this interaction is enhanced in the presence of RWDD3. Interacts with GRIP1. Interacts with NR4A3 (via nuclear receptor DNA-binding domain), represses transcription activity of NR4A3 on the POMC promoter Nur response element (NurRE). Directly interacts with PNRC2 to attract and form a complex with UPF1 and DCP1A; the interaction leads to rapid mRNA degradation. Interacts with GSK3B. Interacts with FNIP1 and FNIP2. Interacts (via C-terminus) with HNRNPU (via C-terminus). Interacts with MCM3AP. Interacts (via domain NR LBD) with HSP90AA1 and HSP90AB1. In the absence of hormonal ligand, interacts with TACC1. Interacts (via NR LBD domain) with ZNF764 (via KRAB domain); the interaction regulates transcription factor activity of NR3C1 by directing its actions toward certain biologic pathways. In terms of processing, acetylation by CLOCK reduces its binding to glucocorticoid response elements and its transcriptional activity. Increased proteasome-mediated degradation in response to glucocorticoids. Post-translationally, phosphorylated in the absence of hormone; becomes hyperphosphorylated in the presence of glucocorticoids. Phosphorylated in the absence of hormone; becomes hyperphosphorylated in the presence of glucocorticoid. The Ser-221, Ser-243 and Ser-421-phosphorylated forms are mainly cytoplasmic, and the Ser-229-phosphorylated form is nuclear. Phosphorylation at Ser-229 increases transcriptional activity. Phosphorylation at Ser-221, Ser-243 and Ser-421 decreases signaling capacity. Phosphorylation at Ser-421 may protect from glucocorticoid-induced apoptosis. Phosphorylation at Ser-221 and Ser-229 is not required in regulation of chromosome segregation. May be dephosphorylated by PPP5C, attenuates NR3C1 action. In terms of processing, sumoylation at Lys-294 and Lys-310 negatively regulates its transcriptional activity. Sumoylation at Lys-718 positively regulates its transcriptional activity in the presence of RWDD3. Sumoylation at Lys-294 and Lys-310 is dispensable whereas sumoylation at Lys-718 is critical for the stimulatory effect of RWDD3 on its transcriptional activity. Heat shock increases sumoylation in a RWDD3-dependent manner. Ubiquitinated. Ubiquitination by UBR5 leads to its degradation: UBR5 specifically recognizes and binds ligand-bound NR3C1 when it is not associated with coactivators (NCOAs). In presence of NCOAs, the UBR5-degron is not accessible, preventing its ubiquitination and degradation. As to expression, expressed in spleen, kidney and liver. Expressed in a circadian manner in the liver. Expressed at highest level in spleen with lesser amounts in kidney and liver.

Its subcellular location is the cytoplasm. It localises to the nucleus. The protein localises to the mitochondrion. The protein resides in the cytoskeleton. It is found in the spindle. Its subcellular location is the microtubule organizing center. It localises to the centrosome. The protein localises to the chromosome. The protein resides in the nucleoplasm. Functionally, receptor for glucocorticoids (GC). Has a dual mode of action: as a transcription factor that binds to glucocorticoid response elements (GRE), both for nuclear and mitochondrial DNA, and as a modulator of other transcription factors. Affects inflammatory responses, cellular proliferation and differentiation in target tissues. Involved in chromatin remodeling. Plays a role in rapid mRNA degradation by binding to the 5' UTR of target mRNAs and interacting with PNRC2 in a ligand-dependent manner which recruits the RNA helicase UPF1 and the mRNA-decapping enzyme DCP1A, leading to RNA decay. Could act as a coactivator for STAT5-dependent transcription upon growth hormone (GH) stimulation and could reveal an essential role of hepatic GR in the control of body growth. Its function is as follows. Has transcriptional activation and repression activity. Mediates glucocorticoid-induced apoptosis. Promotes accurate chromosome segregation during mitosis. May act as a tumor suppressor. May play a negative role in adipogenesis through the regulation of lipolytic and antilipogenic gene expression. In terms of biological role, acts as a dominant negative inhibitor of isoform 1. Has intrinsic transcriptional activity independent of isoform Alpha when both isoforms are coexpressed. Loses this transcription modulator function on its own. Has no hormone-binding activity. May play a role in controlling glucose metabolism by maintaining insulin sensitivity. Reduces hepatic gluconeogenesis through down-regulation of PEPCK in an isoform Alpha-dependent manner. Directly regulates STAT1 expression in isoform Alpha-independent manner. This chain is Glucocorticoid receptor (Nr3c1), found in Mus musculus (Mouse).